A 93-amino-acid polypeptide reads, in one-letter code: uncharacterized protein (93 aa).

Residues W68–I88 form a helical membrane-spanning segment.

The protein localises to the membrane. This is an uncharacterized protein from Mycoplasma pneumoniae (strain ATCC 29342 / M129 / Subtype 1) (Mycoplasmoides pneumoniae).